The primary structure comprises 622 residues: 1,4-alpha-glucan branching enzyme GlgB (622 aa).

The active-site Nucleophile is aspartate 306. Glutamate 358 serves as the catalytic Proton donor. Residues 581–606 (YGGSNVGNRGAVHSDPVEKHGHSHSL) form a disordered region.

The protein belongs to the glycosyl hydrolase 13 family. GlgB subfamily. Monomer.

It catalyses the reaction Transfers a segment of a (1-&gt;4)-alpha-D-glucan chain to a primary hydroxy group in a similar glucan chain.. Its pathway is glycan biosynthesis; glycogen biosynthesis. Catalyzes the formation of the alpha-1,6-glucosidic linkages in glycogen by scission of a 1,4-alpha-linked oligosaccharide from growing alpha-1,4-glucan chains and the subsequent attachment of the oligosaccharide to the alpha-1,6 position. The protein is 1,4-alpha-glucan branching enzyme GlgB of Salinibacter ruber (strain DSM 13855 / M31).